The primary structure comprises 368 residues: Glycoprotein UL18 (368 aa).

An N-terminal signal peptide occupies residues 1–18 (MMTMWCLTLFVLWMLRVV). Positions 19–114 (GMHVLRYGYT…EIALGYRSQS (96 aa)) are alpha-1-like. N-linked (GlcNAc...) asparagine; by host glycosylation is found at Asn56, Asn66, Asn74, Asn95, Asn123, Asn127, Asn150, Asn167, Asn177, Asn193, Asn240, Asn282, and Asn291. Residues 115–208 (VLTWTHECNT…VIYSGFQPPV (94 aa)) are alpha-2-like. The alpha-3-like stretch occupies residues 209 to 303 (THPVVKGGVR…VEIPISVTSP (95 aa)). A helical transmembrane segment spans residues 321–342 (YNTMTISSVLLALLLCALLFAF).

In terms of assembly, interacts with host LILRB1.

It is found in the host membrane. Functionally, plays a role in the protection against host NK cell cytotoxicity by interacting with and modulating the activity of the host inhibitory leukocyte Ig-like receptor 1/LILRB1, which is expressed on monocytes, dendritic cells, as well as subsets of T and NK cells. UL18 exerts an inhibitory effect on LIR-1+ NK cells, while it stimulates LIR-1- NK cell. These modulations prevent lysis of the infected cells by NK cells. In Homo sapiens (Human), this protein is Glycoprotein UL18 (H301).